We begin with the raw amino-acid sequence, 156 residues long: NADH-ubiquinone oxidoreductase 20 kDa subunit (156 aa).

Residues C33, C34, C98, and C128 each contribute to the [4Fe-4S] cluster site.

Belongs to the complex I 20 kDa subunit family. Requires [4Fe-4S] cluster as cofactor.

The protein resides in the mitochondrion. It catalyses the reaction a ubiquinone + NADH + 5 H(+)(in) = a ubiquinol + NAD(+) + 4 H(+)(out). The sequence is that of NADH-ubiquinone oxidoreductase 20 kDa subunit (NAD10) from Paramecium tetraurelia.